A 920-amino-acid chain; its full sequence is Nitrate reductase [NADH] (920 aa).

The tract at residues 1–69 (MAASVENRQF…DTSDDEEDEA (69 aa)) is disordered. The span at 60–69 (DTSDDEEDEA) shows a compositional bias: acidic residues. A Mo-molybdopterin-binding site is contributed by cysteine 185. Positions 534-609 (SLTFTMSEVK…LEEYRVGELI (76 aa)) constitute a Cytochrome b5 heme-binding domain. 2 residues coordinate heme: histidine 569 and histidine 592. The FAD-binding FR-type domain occupies 663-775 (REKIPCKLIS…KGPLGHIEYM (113 aa)). Residues 715 to 718 (RAYT), 732 to 736 (LVKIY), phenylalanine 737, phenylalanine 744, 749 to 751 (LMS), and threonine 802 each bind FAD.

The protein belongs to the nitrate reductase family. As to quaternary structure, homodimer. It depends on FAD as a cofactor. Requires heme as cofactor. Mo-molybdopterin serves as cofactor. In terms of tissue distribution, in cortical cells of roots grown at low nitrate concentrations, in vascular tissues of roots at high nitrate concentrations and in root apex under both conditions.

It catalyses the reaction nitrite + NAD(+) + H2O = nitrate + NADH + H(+). In terms of biological role, nitrate reductase is a key enzyme involved in the first step of nitrate assimilation in plants, fungi and bacteria. This Cichorium intybus (Chicory) protein is Nitrate reductase [NADH] (NIA).